Here is a 500-residue protein sequence, read N- to C-terminus: Cytochrome P450 2D28 (500 aa).

Heme is bound at residue Cys-446.

Belongs to the cytochrome P450 family. Heme serves as cofactor.

The protein resides in the endoplasmic reticulum membrane. It localises to the microsome membrane. In Mesocricetus auratus (Golden hamster), this protein is Cytochrome P450 2D28 (CYP2D28A).